The following is a 73-amino-acid chain: UPF0352 protein HSM_0097 (73 aa).

Belongs to the UPF0352 family.

The sequence is that of UPF0352 protein HSM_0097 from Histophilus somni (strain 2336) (Haemophilus somnus).